An 81-amino-acid chain; its full sequence is Sec-independent protein translocase protein TatA (81 aa).

The chain crosses the membrane as a helical span at residues Met-1–Gly-21. Positions Met-46–Lys-56 are enriched in basic and acidic residues. Residues Met-46–Ala-81 are disordered.

The protein belongs to the TatA/E family. The Tat system comprises two distinct complexes: a TatABC complex, containing multiple copies of TatA, TatB and TatC subunits, and a separate TatA complex, containing only TatA subunits. Substrates initially bind to the TatABC complex, which probably triggers association of the separate TatA complex to form the active translocon.

Its subcellular location is the cell membrane. Its function is as follows. Part of the twin-arginine translocation (Tat) system that transports large folded proteins containing a characteristic twin-arginine motif in their signal peptide across membranes. TatA could form the protein-conducting channel of the Tat system. The protein is Sec-independent protein translocase protein TatA of Mycolicibacterium smegmatis (strain ATCC 700084 / mc(2)155) (Mycobacterium smegmatis).